Here is a 615-residue protein sequence, read N- to C-terminus: Sodium-dependent dopamine transporter (615 aa).

A disordered region spans residues 1-39; the sequence is MQLVPTDDPDEKIGRTSNGMQNATLPIDGPVNTEPKDPA. The Cytoplasmic portion of the chain corresponds to 1 to 46; sequence MQLVPTDDPDEKIGRTSNGMQNATLPIDGPVNTEPKDPAREQWSGK. The segment covering 15-24 has biased composition (polar residues); it reads RTSNGMQNAT. Residues 47-72 traverse the membrane as a helical segment; that stretch reads LDFLLSVVGFAVDLGNIWRFPYLCFK. 4 residues coordinate Na(+): Gly-55, Ala-57, Val-58, and Asn-62. Over 73–76 the chain is Extracellular; sequence NGGG. Residues 77-100 form a helical membrane-spanning segment; sequence VFLIPYSIMVLLTGVPLFYMELCL. Topologically, residues 101–120 are cytoplasmic; sequence GQYYRKGAITTWGRICPLFK. A helical membrane pass occupies residues 121–151; it reads GIGYCVILTAFYVDFFYNVILAWGLHYLYTS. Topologically, residues 152–229 are extracellular; that stretch reads FSFNLPWASC…IRSVTDLGNV (78 aa). Cys-161 and Cys-170 form a disulfide bridge. 2 N-linked (GlcNAc...) asparagine glycosylation sites follow: Asn-162 and Asn-187. Residues 230-250 traverse the membrane as a helical segment; the sequence is RWDIALSLFVVYLICYFSMWK. The Cytoplasmic segment spans residues 251–253; it reads GIH. Residues 254–278 form a helical membrane-spanning segment; that stretch reads TSGKVVWFTALFPYVVLGILFIRGV. Residues 279 to 302 are Extracellular-facing; it reads TLPGWQNGIEYYLRPNFEMLKRPS. Residues 303–328 form a helical membrane-spanning segment; that stretch reads VWQDAATQVFFSLGPGFGVLMAYSSY. Ser-314 is a Na(+) binding site. Topologically, residues 329-334 are cytoplasmic; sequence NDFHNN. Residues 335–358 traverse the membrane as a helical segment; the sequence is VYVDALFTSFINCATSFLSGFVIF. Asn-346 provides a ligand contact to Na(+). The Extracellular segment spans residues 359 to 398; that stretch reads SVLGYMSCKSGKPIEAVAQEGPGLVFVVYPEALSTMPYAP. The chain crosses the membrane as a helical span at residues 399 to 424; that stretch reads FWSVLFFLMLMTLGLDSSFGGSEAII. Residues Leu-411, Asp-414, and Ser-415 each contribute to the Na(+) site. Residues 425-439 lie on the Cytoplasmic side of the membrane; that stretch reads TGLSDEFPILKKNRE. Residues 440 to 460 traverse the membrane as a helical segment; the sequence is VFVGCLFAFYMVIGIAMCTEG. A topological domain (extracellular) is located at residue Gly-461. The helical transmembrane segment at 462-488 threads the bilayer; it reads ILIMEWLIIYGTTWGLLIAVFCEAMVI. The Cytoplasmic segment spans residues 489–518; the sequence is AYIYGLRQFVHDVKEMMGFRPGNYWKFCWS. The helical transmembrane segment at 519-541 threads the bilayer; that stretch reads CAAPFILLSMITSNFINYQALTY. The Extracellular segment spans residues 542 to 544; it reads QDY. A helical transmembrane segment spans residues 545–565; that stretch reads TYPTAANVIGIIFALSGASFI. Over 566–615 the chain is Cytoplasmic; it reads PLVGIYKFVNARGNTISEKWQRVTMPYRKRPNQTEYIPIPTTQPHSDIML.

The protein belongs to the sodium:neurotransmitter symporter (SNF) (TC 2.A.22) family.

The protein localises to the cell membrane. Dopamine transporter. Terminates the action of dopamine by its high affinity sodium-dependent reuptake into presynaptic terminals. Plays a role in the learned avoidance behavior of animals exposed to food that induces mitochondrial stress. The sequence is that of Sodium-dependent dopamine transporter from Caenorhabditis elegans.